Reading from the N-terminus, the 320-residue chain is Cyclin-H (320 aa).

Serine 5 bears the Phosphoserine; by CDK8 mark. Serine 132 is modified (phosphoserine). A Phosphoserine; by CDK8 modification is found at serine 304.

It belongs to the cyclin family. Cyclin C subfamily. In terms of assembly, associates primarily with CDK7 and MAT1 to form the CAK complex. CAK can further associate with the core-TFIIH to form the TFIIH basal transcription factor.

It is found in the nucleus. Regulates CDK7, the catalytic subunit of the CDK-activating kinase (CAK) enzymatic complex. CAK activates the cyclin-associated kinases CDK1, CDK2, CDK4 and CDK6 by threonine phosphorylation. CAK complexed to the core-TFIIH basal transcription factor activates RNA polymerase II by serine phosphorylation of the repetitive C-terminal domain (CTD) of its large subunit (POLR2A), allowing its escape from the promoter and elongation of the transcripts. Involved in cell cycle control and in RNA transcription by RNA polymerase II. Its expression and activity are constant throughout the cell cycle. This is Cyclin-H (CCNH) from Bos taurus (Bovine).